The sequence spans 292 residues: Seed lectin (292 aa).

A signal peptide spans 1–37 (MATSNSRPHLLQTHKPFSVVLAISITFFLLLLNKVNS). N-linked (GlcNAc...) asparagine glycans are attached at residues Asn-82 and Asn-154. Residues Asp-163 and Asp-165 each contribute to the Mn(2+) site. Ca(2+)-binding residues include Asp-165, His-167, Asn-169, and Asp-172. Asp-172 and His-177 together coordinate Mn(2+). The N-linked (GlcNAc...) asparagine glycan is linked to Asn-186.

Belongs to the leguminous lectin family.

Mannose/glucose-specific lectin. The polypeptide is Seed lectin (Styphnolobium japonicum (Japanese pagoda tree)).